We begin with the raw amino-acid sequence, 800 residues long: Mitochondrial intermediate peptidase (800 aa).

The transit peptide at 1–23 (MAGHMLMPLRRRPWTCRACLQRL) directs the protein to the mitochondrion. Over residues 27–41 (RRSLETAASPSSQSD) the composition is skewed to polar residues. Residues 27–59 (RRSLETAASPSSQSDVYDYAPTNHSTQKKSNDE) are disordered. Residue histidine 563 coordinates Zn(2+). Glutamate 564 is a catalytic residue. Positions 567 and 570 each coordinate Zn(2+).

This sequence belongs to the peptidase M3 family. Zn(2+) serves as cofactor.

The protein localises to the mitochondrion matrix. It carries out the reaction Release of an N-terminal octapeptide as second stage of processing of some proteins imported into the mitochondrion.. Its function is as follows. Cleaves proteins, imported into the mitochondrion, to their mature size. While most mitochondrial precursor proteins are processed to the mature form in one step by mitochondrial processing peptidase (MPP), the sequential cleavage by MIP of an octapeptide after initial processing by MPP is a required step for a subgroup of nuclear-encoded precursor proteins destined for the matrix or the inner membrane. The chain is Mitochondrial intermediate peptidase (oct1) from Aspergillus oryzae (strain ATCC 42149 / RIB 40) (Yellow koji mold).